Reading from the N-terminus, the 290-residue chain is L-fucono-1,5-lactonase (290 aa).

This sequence belongs to the metallo-dependent hydrolases superfamily.

The catalysed reaction is L-fucono-1,5-lactone + H2O = L-fuconate + H(+). The enzyme catalyses L-fucono-1,4-lactone + H2O = L-fuconate + H(+). It catalyses the reaction D-arabinono-1,4-lactone + H2O = D-arabinonate + H(+). It carries out the reaction L-xylono-1,4-lactone + H2O = L-xylonate + H(+). The catalysed reaction is L-galactono-1,4-lactone + H2O = L-galactonate + H(+). In terms of biological role, catalyzes the hydrolysis of L-fucono-1,5-lactone to L-fuconate. Can also hydrolyze L-fucono-1,4-lactone, L-galactono-1,4-lactone D-arabinono-1,4-lactone and L-xylono-1,4-lactone. This Burkholderia ambifaria (strain ATCC BAA-244 / DSM 16087 / CCUG 44356 / LMG 19182 / AMMD) (Burkholderia cepacia (strain AMMD)) protein is L-fucono-1,5-lactonase.